The following is a 494-amino-acid chain: Alanine--glyoxylate aminotransferase 2-like (494 aa).

N6-(pyridoxal phosphate)lysine is present on lysine 291.

It belongs to the class-III pyridoxal-phosphate-dependent aminotransferase family. The cofactor is pyridoxal 5'-phosphate.

This chain is Alanine--glyoxylate aminotransferase 2-like, found in Drosophila melanogaster (Fruit fly).